The sequence spans 204 residues: UPF0134 protein MPN_655 (204 aa).

A disordered region spans residues 46-132 (EVENKPKIPI…FNEFKDSNNQ (87 aa)). Residues 64 to 80 (SPKPLKPPKPPKPPKGP) show a composition bias toward pro residues. Positions 117–132 (YVTRKEFNEFKDSNNQ) are enriched in basic and acidic residues.

It belongs to the UPF0134 family.

This Mycoplasma pneumoniae (strain ATCC 29342 / M129 / Subtype 1) (Mycoplasmoides pneumoniae) protein is UPF0134 protein MPN_655.